A 274-amino-acid polypeptide reads, in one-letter code: Thymidylate synthase (274 aa).

DUMP is bound at residue Arg-21. Residue His-51 participates in (6R)-5,10-methylene-5,6,7,8-tetrahydrofolate binding. Position 123–124 (123–124) interacts with dUMP; that stretch reads RR. Catalysis depends on Cys-156, which acts as the Nucleophile. DUMP-binding positions include 176-179, Asn-187, and 217-219; these read RSAD and HIY. (6R)-5,10-methylene-5,6,7,8-tetrahydrofolate is bound at residue Asp-179. Ser-273 contacts (6R)-5,10-methylene-5,6,7,8-tetrahydrofolate.

The protein belongs to the thymidylate synthase family. Bacterial-type ThyA subfamily. Homodimer.

Its subcellular location is the cytoplasm. The enzyme catalyses dUMP + (6R)-5,10-methylene-5,6,7,8-tetrahydrofolate = 7,8-dihydrofolate + dTMP. It participates in pyrimidine metabolism; dTTP biosynthesis. Its function is as follows. Catalyzes the reductive methylation of 2'-deoxyuridine-5'-monophosphate (dUMP) to 2'-deoxythymidine-5'-monophosphate (dTMP) while utilizing 5,10-methylenetetrahydrofolate (mTHF) as the methyl donor and reductant in the reaction, yielding dihydrofolate (DHF) as a by-product. This enzymatic reaction provides an intracellular de novo source of dTMP, an essential precursor for DNA biosynthesis. The polypeptide is Thymidylate synthase (Francisella tularensis subsp. tularensis (strain SCHU S4 / Schu 4)).